The following is a 542-amino-acid chain: Chaperonin GroEL 2 (542 aa).

Residues threonine 30–proline 33, lysine 51, aspartate 87–threonine 91, glycine 415, and aspartate 496 each bind ATP.

It belongs to the chaperonin (HSP60) family. In terms of assembly, forms a cylinder of 14 subunits composed of two heptameric rings stacked back-to-back. Interacts with the co-chaperonin GroES.

The protein localises to the cytoplasm. The enzyme catalyses ATP + H2O + a folded polypeptide = ADP + phosphate + an unfolded polypeptide.. Together with its co-chaperonin GroES, plays an essential role in assisting protein folding. The GroEL-GroES system forms a nano-cage that allows encapsulation of the non-native substrate proteins and provides a physical environment optimized to promote and accelerate protein folding. The sequence is that of Chaperonin GroEL 2 from Cereibacter sphaeroides (strain ATCC 17023 / DSM 158 / JCM 6121 / CCUG 31486 / LMG 2827 / NBRC 12203 / NCIMB 8253 / ATH 2.4.1.) (Rhodobacter sphaeroides).